Consider the following 88-residue polypeptide: UPF0297 protein BLi02868/BL02032 (88 aa).

Belongs to the UPF0297 family.

In Bacillus licheniformis (strain ATCC 14580 / DSM 13 / JCM 2505 / CCUG 7422 / NBRC 12200 / NCIMB 9375 / NCTC 10341 / NRRL NRS-1264 / Gibson 46), this protein is UPF0297 protein BLi02868/BL02032.